We begin with the raw amino-acid sequence, 240 residues long: tRNA pseudouridine synthase B (240 aa).

Asp54 serves as the catalytic Nucleophile.

This sequence belongs to the pseudouridine synthase TruB family. Type 1 subfamily.

The catalysed reaction is uridine(55) in tRNA = pseudouridine(55) in tRNA. Its function is as follows. Responsible for synthesis of pseudouridine from uracil-55 in the psi GC loop of transfer RNAs. In Chlorobaculum tepidum (strain ATCC 49652 / DSM 12025 / NBRC 103806 / TLS) (Chlorobium tepidum), this protein is tRNA pseudouridine synthase B.